The sequence spans 234 residues: Probable chemoreceptor glutamine deamidase CheD 1 (234 aa).

The disordered stretch occupies residues Ala-183–Ala-234. Residues Arg-190 to Val-201 are compositionally biased toward basic and acidic residues. Residues Arg-223–Ala-234 are compositionally biased toward polar residues.

This sequence belongs to the CheD family.

It carries out the reaction L-glutaminyl-[protein] + H2O = L-glutamyl-[protein] + NH4(+). Probably deamidates glutamine residues to glutamate on methyl-accepting chemotaxis receptors (MCPs), playing an important role in chemotaxis. The chain is Probable chemoreceptor glutamine deamidase CheD 1 from Burkholderia thailandensis (strain ATCC 700388 / DSM 13276 / CCUG 48851 / CIP 106301 / E264).